The following is a 254-amino-acid chain: Type III pantothenate kinase (254 aa).

6–13 serves as a coordination point for ATP; it reads DVGNTNTT. Substrate-binding positions include Y100 and 107–110; that span reads GADR. D109 serves as the catalytic Proton acceptor. D129 serves as a coordination point for K(+). T132 lines the ATP pocket. T184 contacts substrate.

The protein belongs to the type III pantothenate kinase family. In terms of assembly, homodimer. NH4(+) serves as cofactor. Requires K(+) as cofactor.

It is found in the cytoplasm. It catalyses the reaction (R)-pantothenate + ATP = (R)-4'-phosphopantothenate + ADP + H(+). It participates in cofactor biosynthesis; coenzyme A biosynthesis; CoA from (R)-pantothenate: step 1/5. Catalyzes the phosphorylation of pantothenate (Pan), the first step in CoA biosynthesis. This Anaeromyxobacter dehalogenans (strain 2CP-C) protein is Type III pantothenate kinase.